Consider the following 2344-residue polypeptide: Pecanex-like protein 1 (2344 aa).

The next 2 helical transmembrane spans lie at 33 to 53 (ALHL…YMAL) and 57 to 77 (MIIV…LKMV). Disordered stretches follow at residues 101–163 (QRAK…GSSR), 271–290 (SHSY…SSSA), 306–692 (QQQR…TRAR), and 749–837 (VTRS…VQSR). The span at 143–163 (SSRNSYAGLDPSNQIGSGSSR) shows a compositional bias: polar residues. Over residues 272–282 (HSYRKEHRPRG) the composition is skewed to basic residues. Residues 328–343 (RESSAGKSCPPAQSQP) show a composition bias toward polar residues. Residues 372-390 (SLRSLSTRSSGSTESYCSG) are compositionally biased toward low complexity. Positions 396 to 406 (NSTLSSYKSEQ) are enriched in polar residues. Composition is skewed to basic and acidic residues over residues 416–458 (LSEH…DKTA), 508–522 (RPPE…EQSE), and 531–547 (RVCK…DVRP). Residues 557–572 (TSAHKPGRRRTGKKRA) are compositionally biased toward basic residues. Residues 616–638 (SIHSAHQFSSDSSSSATSHSCQS) are compositionally biased toward low complexity. A compositionally biased stretch (polar residues) spans 749–758 (VTRSRNSLPS). Low complexity-rich tracts occupy residues 770-781 (AATGAAQASEEA) and 817-835 (LSLQ…VKVQ). 3 helical membrane-spanning segments follow: residues 1010 to 1030 (ILAV…LIQG), 1035 to 1055 (IWVF…LKSV), and 1069 to 1089 (IIAY…WLLD). Residue asparagine 1094 is glycosylated (N-linked (GlcNAc...) asparagine). A helical membrane pass occupies residues 1119 to 1139 (LVIVFTLCFPIVFFIGLLPQV). N-linked (GlcNAc...) asparagine glycosylation is present at asparagine 1158. 4 consecutive transmembrane segments (helical) span residues 1163 to 1183 (LLAA…LYGL), 1196 to 1216 (HVPV…YHLS), 1269 to 1289 (LVVC…TVFT), and 1297 to 1317 (YVLY…LPQV). Residues asparagine 1582, asparagine 1723, asparagine 1985, and asparagine 2075 are each glycosylated (N-linked (GlcNAc...) asparagine). The disordered stretch occupies residues 2051–2123 (EDSDTGGGTS…SSLVRQSPAR (73 aa)). Polar residues-rich tracts occupy residues 2061–2081 (CPGN…QGST) and 2095–2118 (PTTS…SLVR). Asparagine 2231, asparagine 2237, and asparagine 2263 each carry an N-linked (GlcNAc...) asparagine glycan.

It belongs to the pecanex family.

It localises to the membrane. This is Pecanex-like protein 1 from Mus musculus (Mouse).